A 292-amino-acid polypeptide reads, in one-letter code: Phosphoribulokinase, chromosomal (292 aa).

An ATP-binding site is contributed by 12–20; sequence GSSGAGTTS.

This sequence belongs to the phosphoribulokinase family. As to quaternary structure, homooctamer.

The catalysed reaction is D-ribulose 5-phosphate + ATP = D-ribulose 1,5-bisphosphate + ADP + H(+). Its pathway is carbohydrate biosynthesis; Calvin cycle. This chain is Phosphoribulokinase, chromosomal (cfxP), found in Cupriavidus necator (strain ATCC 17699 / DSM 428 / KCTC 22496 / NCIMB 10442 / H16 / Stanier 337) (Ralstonia eutropha).